A 226-amino-acid chain; its full sequence is Orotidine 5'-phosphate decarboxylase (226 aa).

Substrate-binding positions include Asp8, Lys30, 58–67 (DLKIHDIPNT), Thr117, Arg177, Gln186, Gly206, and Arg207. Catalysis depends on Lys60, which acts as the Proton donor.

The protein belongs to the OMP decarboxylase family. Type 1 subfamily. In terms of assembly, homodimer.

The enzyme catalyses orotidine 5'-phosphate + H(+) = UMP + CO2. The protein operates within pyrimidine metabolism; UMP biosynthesis via de novo pathway; UMP from orotate: step 2/2. Catalyzes the decarboxylation of orotidine 5'-monophosphate (OMP) to uridine 5'-monophosphate (UMP). The chain is Orotidine 5'-phosphate decarboxylase from Campylobacter jejuni subsp. doylei (strain ATCC BAA-1458 / RM4099 / 269.97).